We begin with the raw amino-acid sequence, 142 residues long: Large ribosomal subunit protein uL13 (142 aa).

This sequence belongs to the universal ribosomal protein uL13 family. As to quaternary structure, part of the 50S ribosomal subunit.

This protein is one of the early assembly proteins of the 50S ribosomal subunit, although it is not seen to bind rRNA by itself. It is important during the early stages of 50S assembly. The sequence is that of Large ribosomal subunit protein uL13 from Nitrosococcus oceani (strain ATCC 19707 / BCRC 17464 / JCM 30415 / NCIMB 11848 / C-107).